Reading from the N-terminus, the 30-residue chain is Cliotide T19 (30 aa).

The cyclopeptide (Gly-Asn) cross-link spans 1-30 (GSVIKCGESCLLGKCYTPGCTCSRPICKKN). Intrachain disulfides connect Cys-6–Cys-20, Cys-10–Cys-22, and Cys-15–Cys-27.

Post-translationally, contains 3 disulfide bonds. This is a cyclic peptide. As to expression, expressed in root nodules but not in seed.

In terms of biological role, probably participates in a plant defense mechanism. Active against Gram-negative bacterium E.coli ATCC 700926 (MIC=0.6 uM) under low-salt conditions. Not active against Gram-positive bacterium S.aureus ATCC 12600 up to a concentration of 100 uM under low-salt conditions. Exhibits immunomodulatory activity but no cytotoxicity in vitro. This is Cliotide T19 from Clitoria ternatea (Butterfly pea).